A 191-amino-acid polypeptide reads, in one-letter code: Peptidyl-tRNA hydrolase (191 aa).

Tyr14 provides a ligand contact to tRNA. The active-site Proton acceptor is the His19. Residues Phe64, Asn66, and Asn113 each contribute to the tRNA site.

The protein belongs to the PTH family. Monomer.

It localises to the cytoplasm. The catalysed reaction is an N-acyl-L-alpha-aminoacyl-tRNA + H2O = an N-acyl-L-amino acid + a tRNA + H(+). In terms of biological role, hydrolyzes ribosome-free peptidyl-tRNAs (with 1 or more amino acids incorporated), which drop off the ribosome during protein synthesis, or as a result of ribosome stalling. Its function is as follows. Catalyzes the release of premature peptidyl moieties from peptidyl-tRNA molecules trapped in stalled 50S ribosomal subunits, and thus maintains levels of free tRNAs and 50S ribosomes. The polypeptide is Peptidyl-tRNA hydrolase (Fusobacterium nucleatum subsp. nucleatum (strain ATCC 25586 / DSM 15643 / BCRC 10681 / CIP 101130 / JCM 8532 / KCTC 2640 / LMG 13131 / VPI 4355)).